Reading from the N-terminus, the 146-residue chain is NADH-quinone oxidoreductase subunit A (146 aa).

A run of 3 helical transmembrane segments spans residues 4–24 (IYHWGLIAFIVGILFLCVFML), 63–83 (LIAMFFVIFDVEGIYVYAWAI), and 91–111 (IGFSEIFIFIFILLVSLIYLI).

The protein belongs to the complex I subunit 3 family. In terms of assembly, NDH-1 is composed of 13 different subunits. Subunits NuoA, H, J, K, L, M, N constitute the membrane sector of the complex.

Its subcellular location is the cell inner membrane. It carries out the reaction a quinone + NADH + 5 H(+)(in) = a quinol + NAD(+) + 4 H(+)(out). Functionally, NDH-1 shuttles electrons from NADH, via FMN and iron-sulfur (Fe-S) centers, to quinones in the respiratory chain. The immediate electron acceptor for the enzyme in this species is believed to be ubiquinone. Couples the redox reaction to proton translocation (for every two electrons transferred, four hydrogen ions are translocated across the cytoplasmic membrane), and thus conserves the redox energy in a proton gradient. The polypeptide is NADH-quinone oxidoreductase subunit A (Blochmanniella pennsylvanica (strain BPEN)).